The primary structure comprises 236 residues: Small ribosomal subunit protein uS2c (236 aa).

This sequence belongs to the universal ribosomal protein uS2 family.

Its subcellular location is the plastid. The protein resides in the chloroplast. The protein is Small ribosomal subunit protein uS2c (rps2) of Ceratophyllum demersum (Rigid hornwort).